A 776-amino-acid polypeptide reads, in one-letter code: MYRLNIVSTNPSGSVQQQQQAQGQQVISSVVRPQQQQPPPQLALVQTGGSGGTTTTIIGLTSLNALNATTITGLVAGAAGSSTSAIAAAGASNSGSGPSTATTKHILKAATTNNNISIVKIVDDIMLKAVKVEPLPMDTGGGGGGVSMIPSSATTSGGVTVTAIPASVAPMPPVAAGTNVSSNGSVTVYASGKRRLESNEEWISSPSPGSVPGSAPPLSPSPGSQSTTYTTTMSNGYSSPMSTGSYDPYSPNGKMGREDLSPSSSLNGYTDGSDAKKQKKGPTPRQQEELCLVCGDRESGYHYNALTCEGCKGFFRRSVTKNAVYCCKFGHACEMDMYMRRKCQECRLKKCLAVGMRPECVVPENQCAIKRKEKKAQKEKDKVQTNATVSTTNSTYRSEILPILMKCDPPPHQAIPLLPEKLLQENRLRNIPLLTANQMAVIYKLIWYQDGYEQPSEEDLKRIMIGSPNEEEDQHDVHFRHITEITILTVQLIVEFAKGLPAFTKIPQEDQITLLKACSSEVMMLRMARRYDAATDSILFANNRSYTRDSYRMAGMADTIEDLLHFCRQMFSLTVDNVEYALLTAIVIFSDRPGLEQAELVEHIQSYYIDTLRIYILNRHAGDPKCSVIFAKLLSILTELRTLGNQNSEMCFSLKLKNRKLPRFLEEIWDVQDIPPSMQAQMHSHGTQSSSSSSSSSSSSSNGSSNGNSSSNSNSSQHGPHPHPHGQQLTPNQQQHQQQHSQLQQVHANGSGSGGGSNNNSSSGGVVPGLGMLDQV.

A modulating region spans residues 1 to 290; that stretch reads MYRLNIVSTN…GPTPRQQEEL (290 aa). The segment at 199 to 283 is disordered; that stretch reads NEEWISSPSP…DAKKQKKGPT (85 aa). Residues 204-213 are compositionally biased toward low complexity; that stretch reads SSPSPGSVPG. Polar residues-rich tracts occupy residues 227–245 and 261–270; these read TTYTTTMSNGYSSPMSTGS and SPSSSLNGYT. The segment at residues 288-363 is a DNA-binding region (nuclear receptor); sequence EELCLVCGDR…VGMRPECVVP (76 aa). 2 NR C4-type zinc fingers span residues 291 to 311 and 327 to 346; these read CLVCGDRESGYHYNALTCEGC and CKFGHACEMDMYMRRKCQEC. Residues 437 to 673 enclose the NR LBD domain; sequence NQMAVIYKLI…FLEEIWDVQD (237 aa). Residues 679–688 are compositionally biased toward polar residues; the sequence is QAQMHSHGTQ. Residues 679-776 are disordered; it reads QAQMHSHGTQ…VPGLGMLDQV (98 aa). The span at 689–745 shows a compositional bias: low complexity; the sequence is SSSSSSSSSSSSSNGSSNGNSSSNSNSSQHGPHPHPHGQQLTPNQQQHQQQHSQLQQ.

This sequence belongs to the nuclear hormone receptor family. NR1 subfamily. In terms of assembly, heterodimer of USP and ECR. Only the heterodimer is capable of high-affinity binding to ecdysone. As to expression, a peak level expression is seen in the fat body of previtellogenic female mosquitos at one and two days after eclosion, levels fall three-fold at three days posteclosion.

The protein localises to the nucleus. Receptor for ecdysone. Binds to ecdysone response elements (ECRES). The chain is Ecdysone receptor (EcR) from Aedes aegypti (Yellowfever mosquito).